A 739-amino-acid polypeptide reads, in one-letter code: NAD(P)H-quinone oxidoreductase subunit 5, chloroplastic (739 aa).

Transmembrane regions (helical) follow at residues 9–29 (WVIP…LLLV), 40–60 (WAFP…NLSI), 89–109 (IDPL…VVLI), 144–164 (LIQI…LIGF), 184–204 (IGDF…GSFE), 219–239 (NGVH…GAVA), 258–278 (TPIS…FLVA), 280–300 (LLPI…IGVI), 327–347 (LGYT…FHLI), 354–374 (ALLF…VGYS), 396–416 (TTFL…CFWS), 425–445 (WLYS…TAFY), 542–562 (TMLF…SIGI), 597–617 (FFIN…IAFL), and 719–739 (LFLY…WSLI).

This sequence belongs to the complex I subunit 5 family. NDH is composed of at least 16 different subunits, 5 of which are encoded in the nucleus.

It is found in the plastid. It localises to the chloroplast thylakoid membrane. The catalysed reaction is a plastoquinone + NADH + (n+1) H(+)(in) = a plastoquinol + NAD(+) + n H(+)(out). The enzyme catalyses a plastoquinone + NADPH + (n+1) H(+)(in) = a plastoquinol + NADP(+) + n H(+)(out). In terms of biological role, NDH shuttles electrons from NAD(P)H:plastoquinone, via FMN and iron-sulfur (Fe-S) centers, to quinones in the photosynthetic chain and possibly in a chloroplast respiratory chain. The immediate electron acceptor for the enzyme in this species is believed to be plastoquinone. Couples the redox reaction to proton translocation, and thus conserves the redox energy in a proton gradient. The protein is NAD(P)H-quinone oxidoreductase subunit 5, chloroplastic (ndhF) of Chloranthus spicatus (Chulantree).